The following is a 453-amino-acid chain: Trigger factor (453 aa).

The PPIase FKBP-type domain maps to 171–256 (GDRVTVSFKG…ATKVEAPQDV (86 aa)).

This sequence belongs to the FKBP-type PPIase family. Tig subfamily.

It localises to the cytoplasm. It carries out the reaction [protein]-peptidylproline (omega=180) = [protein]-peptidylproline (omega=0). Involved in protein export. Acts as a chaperone by maintaining the newly synthesized protein in an open conformation. Functions as a peptidyl-prolyl cis-trans isomerase. The sequence is that of Trigger factor from Rhodopseudomonas palustris (strain BisB5).